Consider the following 362-residue polypeptide: Protein RAFTIN 1B (362 aa).

A signal peptide spans 1–20 (MARFLVALLAATLVAVQAGG). The interval 58-94 (STSFVRDPEDRPPFDYRDYSRSSSDDEPSKSTVAASG) is disordered. Positions 63 to 86 (RDPEDRPPFDYRDYSRSSSDDEPS) are enriched in basic and acidic residues. Asparagine 102 carries an N-linked (GlcNAc...) asparagine glycan. The BURP domain maps to 142-356 (FFHEEAVRVG…PYGHIIWAKN (215 aa)).

In terms of tissue distribution, specifically expressed in anthers, in the tapetum and microspores (at protein level).

Functionally, required for pollen development. Probably synthesized in the tapetum, packaged in Ubisch bodies and transported at appropriate stages to the micropsores. This is Protein RAFTIN 1B (RAFTIN1B) from Triticum aestivum (Wheat).